The following is a 317-amino-acid chain: tRNA pseudouridine synthase B (317 aa).

D47 (nucleophile) is an active-site residue.

Belongs to the pseudouridine synthase TruB family. Type 1 subfamily.

The catalysed reaction is uridine(55) in tRNA = pseudouridine(55) in tRNA. Responsible for synthesis of pseudouridine from uracil-55 in the psi GC loop of transfer RNAs. The protein is tRNA pseudouridine synthase B of Vibrio atlanticus (strain LGP32) (Vibrio splendidus (strain Mel32)).